A 1501-amino-acid polypeptide reads, in one-letter code: Pleiotropic ABC efflux transporter of multiple drugs CDR1 (1501 aa).

The disordered stretch occupies residues 1–30 (MSDSKMSSQDESKLEKAISQDSSSENHSIN). Topologically, residues 1–513 (MSDSKMSSQD…NFLRMKGDPS (513 aa)) are cytoplasmic. The segment at 2–512 (SDSKMSSQDE…RNFLRMKGDP (511 aa)) is NBD1. Residues 8–18 (SQDESKLEKAI) are compositionally biased toward basic and acidic residues. The ABC transporter 1 domain maps to 150 to 404 (LATEGFRHFQ…FEKMGWKCPQ (255 aa)). The helical transmembrane segment at 514–534 (IPIFSVFGQLVMGLILSSVFY) threads the bilayer. At 535-548 (NLSQTTGSFYYRGA) the chain is on the extracellular side. Residues 549-569 (AMFFAVLFNAFSSLLEIMSLF) form a helical membrane-spanning segment. Residues 570-597 (EARPIVEKHKKYALYRPSADALASIISE) lie on the Cytoplasmic side of the membrane. A helical transmembrane segment spans residues 598 to 618 (LPVKLAMSMSFNFVFYFMVNF). At 619 to 622 (RRNP) the chain is on the extracellular side. The helical transmembrane segment at 623 to 643 (GRFFFYWLMCIWCTFVMSHLF) threads the bilayer. Topologically, residues 644–654 (RSIGAVSTSIS) are cytoplasmic. Residues 655-675 (GAMTPATVLLLAMVIYTGFVI) form a helical membrane-spanning segment. Topologically, residues 676-764 (PTPSMLGWSR…QYYNSHKWRN (89 aa)) are extracellular. Residues 765–785 (LGITIGFAVFFLAIYIALTEF) traverse the membrane as a helical segment. At 786–1195 (NKGAMQKGEI…TIVQDWRSPG (410 aa)) the chain is on the cytoplasmic side. Positions 786 to 1195 (NKGAMQKGEI…TIVQDWRSPG (410 aa)) are NBD2. Residues 859–1103 (FFWRDLTYQV…MINYFEKYGA (245 aa)) form the ABC transporter 2 domain. 895–902 (GASGAGKT) is a binding site for ATP. A coiled-coil region spans residues 1137–1164 (RNSSEYQAVREEINRMEAELSKLPRDND). Residues 1196–1216 (YIYSKIFLVVSAALFNGFSFF) traverse the membrane as a helical segment. Topologically, residues 1217 to 1229 (KAKNNMQGLQNQM) are extracellular. A helical transmembrane segment spans residues 1230-1250 (FSVFMFFIPFNTLVQQMLPYF). Residues 1251–1280 (VKQRDVYEVREAPSRTFSWFAFIAGQITSE) lie on the Cytoplasmic side of the membrane. Residues 1281-1301 (IPYQVAVGTIAFFCWYYPLGL) form a helical membrane-spanning segment. Residues 1302 to 1314 (YNNATPTDSVNPR) lie on the Extracellular side of the membrane. Residues 1315-1335 (GVLMWMLVTAFYVYTATMGQL) traverse the membrane as a helical segment. At 1336–1355 (CMSFSELADNAANLATLLFT) the chain is on the cytoplasmic side. Residues 1356 to 1376 (MCLNFCGVLAGPDVLPGFWIF) form a helical membrane-spanning segment. The Extracellular segment spans residues 1377–1466 (MYRCNPFTYL…NSLYSERWRN (90 aa)). A helical transmembrane segment spans residues 1467-1487 (FGIFIAFIAINIILTVIFYWL). The Cytoplasmic portion of the chain corresponds to 1488–1501 (ARVPKGNREKKNKK).

This sequence belongs to the ABC transporter superfamily.

It is found in the cell membrane. With respect to regulation, disulfiram reverses CDR1-mediated drug resistance by interaction with both ATP and substrate-binding sites of the transporter and may be useful for antifungal therapy. In terms of biological role, pleiotropic ABC efflux transporter that confers resistance to numerous chemicals including anisomycin, cycloheximide, fluconazole, miconazole, ketoconazole, itriconazole, nystatin, terbinafine, amorolfine, brefeldin A, amphotericin B, fluphenazine, as well as estrogen. Plays a role in farnesol-induced apoptotic process through glutathione efflux activity. Mediates in-to-out translocation of membrane phospholipids including aminophospholipids and thus regulates asymmetric distribution of phosphatidylethanolamine. Exhibits nucleoside triphosphatase activity. In Candida albicans (strain SC5314 / ATCC MYA-2876) (Yeast), this protein is Pleiotropic ABC efflux transporter of multiple drugs CDR1 (CDR1).